The sequence spans 540 residues: Chaperonin GroEL (540 aa).

Residues 30-33 (TLGP), Lys-51, 87-91 (DGTTT), Gly-415, 479-481 (NAA), and Asp-495 each bind ATP.

This sequence belongs to the chaperonin (HSP60) family. In terms of assembly, forms a cylinder of 14 subunits composed of two heptameric rings stacked back-to-back. Interacts with the co-chaperonin GroES.

The protein resides in the cytoplasm. The enzyme catalyses ATP + H2O + a folded polypeptide = ADP + phosphate + an unfolded polypeptide.. In terms of biological role, together with its co-chaperonin GroES, plays an essential role in assisting protein folding. The GroEL-GroES system forms a nano-cage that allows encapsulation of the non-native substrate proteins and provides a physical environment optimized to promote and accelerate protein folding. This chain is Chaperonin GroEL, found in Raoultella ornithinolytica (Klebsiella ornithinolytica).